Here is a 635-residue protein sequence, read N- to C-terminus: Threonine--tRNA ligase (635 aa).

Residues 1 to 61 (MIKITLKDGK…HKDSSLEILT (61 aa)) enclose the TGS domain. A catalytic region spans residues 242-532 (DHRKLGKELD…LIEQYAGAFP (291 aa)). C333, H384, and H509 together coordinate Zn(2+).

It belongs to the class-II aminoacyl-tRNA synthetase family. In terms of assembly, homodimer. Requires Zn(2+) as cofactor.

The protein localises to the cytoplasm. It carries out the reaction tRNA(Thr) + L-threonine + ATP = L-threonyl-tRNA(Thr) + AMP + diphosphate + H(+). Catalyzes the attachment of threonine to tRNA(Thr) in a two-step reaction: L-threonine is first activated by ATP to form Thr-AMP and then transferred to the acceptor end of tRNA(Thr). Also edits incorrectly charged L-seryl-tRNA(Thr). This chain is Threonine--tRNA ligase, found in Clostridium botulinum (strain ATCC 19397 / Type A).